We begin with the raw amino-acid sequence, 125 residues long: Prefoldin subunit beta (125 aa).

The protein belongs to the prefoldin subunit beta family. As to quaternary structure, heterohexamer of two alpha and four beta subunits.

The protein resides in the cytoplasm. In terms of biological role, molecular chaperone capable of stabilizing a range of proteins. Seems to fulfill an ATP-independent, HSP70-like function in archaeal de novo protein folding. The protein is Prefoldin subunit beta of Pyrobaculum calidifontis (strain DSM 21063 / JCM 11548 / VA1).